The chain runs to 88 residues: ATP synthase epsilon chain (88 aa).

This sequence belongs to the ATPase epsilon chain family. In terms of assembly, F-type ATPases have 2 components, CF(1) - the catalytic core - and CF(0) - the membrane proton channel. CF(1) has five subunits: alpha(3), beta(3), gamma(1), delta(1), epsilon(1). CF(0) has three main subunits: a, b and c.

The protein resides in the cell inner membrane. Its function is as follows. Produces ATP from ADP in the presence of a proton gradient across the membrane. The chain is ATP synthase epsilon chain (atpC) from Chlorobium limicola.